Consider the following 442-residue polypeptide: Syndecan-3 (442 aa).

Disordered regions lie at residues 1-25 (MKPG…APGA) and 47-80 (RWRN…YSGS). The signal sequence occupies residues 1-44 (MKPGPPRRGTAQGQRVDTATHAPGARGLLLPPLLLLLLAGRAAG). The Extracellular segment spans residues 45-387 (AQRWRNENFE…SILERKEVLV (343 aa)). The segment covering 48–58 (WRNENFERPVD) has biased composition (basic and acidic residues). Acidic residues predominate over residues 61–75 (GSGDDDSFPDDELDD). 4 O-linked (Xyl...) (glycosaminoglycan) serine glycosylation sites follow: Ser78, Ser80, Ser82, and Ser89. Thr107 carries O-linked (GalNAc) threonine; by GALNT13 glycosylation. Disordered regions lie at residues 152-199 (ESSQ…PATA), 253-293 (ATSR…AQTP), and 305-327 (EPEV…TTQP). Low complexity-rich tracts occupy residues 157-199 (ATTI…PATA) and 276-287 (TLPLGTTAPGPT). Ser161 is a glycosylation site (O-linked (GalNAc) serine; by GALNT13). Residues Thr162, Thr163, Thr170, and Thr172 are each glycosylated (O-linked (GalNAc) threonine; by GALNT13). O-linked (Xyl...) (glycosaminoglycan) serine glycans are attached at residues Ser315 and Ser367. A helical transmembrane segment spans residues 388–408 (AVIVGGVVGALFAAFLVTLLI). 4 positions are modified to phosphotyrosine: Tyr409, Tyr419, Tyr431, and Tyr441. Over 409-442 (YRMKKKDEGSYTLEEPKQASVTYQKPDKQEEFYA) the chain is Cytoplasmic. Residues 419–442 (YTLEEPKQASVTYQKPDKQEEFYA) are disordered. Over residues 433 to 442 (KPDKQEEFYA) the composition is skewed to basic and acidic residues.

This sequence belongs to the syndecan proteoglycan family. In terms of assembly, interacts with TIAM1. Interacts with PTN (via heparan sulfate chains); this interaction mediates the neurite outgrowth-promoting signal from PTN to the cytoskeleton of growing neurites; this interaction mediates osteoblast recruitment. Interacts with MDK; this interaction induces SDC3 clustering; this interaction induces neuronal cell adhesion and neurite outgrowth. In terms of processing, O-glycosylated within the Thr/Ser-rich region which could interact with lectin domains on other molecules.

It localises to the cell membrane. Its function is as follows. Cell surface proteoglycan that may bear heparan sulfate. May have a role in the organization of cell shape by affecting the actin cytoskeleton, possibly by transferring signals from the cell surface in a sugar-dependent mechanism. In Mus musculus (Mouse), this protein is Syndecan-3 (Sdc3).